The sequence spans 1458 residues: Secretory phospholipase A2 receptor (1458 aa).

The N-terminal stretch at 1–23 (MLLSLLLLLLLGAPRRCTEGAAA) is a signal peptide. The Extracellular segment spans residues 24–1393 (ALSPERVLKW…EHPGKGPSHS (1370 aa)). Cystine bridges form between Cys49/Cys62, Cys87/Cys104, Cys176/Cys202, Cys190/Cys217, Cys258/Cys352, Cys328/Cys344, Cys404/Cys499, Cys476/Cys491, Cys615/Cys632, Cys697/Cys794, Cys772/Cys786, Cys838/Cys935, Cys912/Cys927, Cys1065/Cys1085, Cys1207/Cys1221, Cys1278/Cys1373, and Cys1350/Cys1365. Residues 49 to 113 (CIQAGKSVLT…CDSTHVSLRW (65 aa)) enclose the Ricin B-type lectin domain. Asn91 carries an N-linked (GlcNAc...) asparagine glycan. One can recognise a Fibronectin type-II domain in the interval 171-219 (AHGTPCMFPFQYNHQWHHECTREGRQDDSLWCATTSRYERDEKWGFCPD). 8 C-type lectin domains span residues 227 to 356 (CDAV…KKYL), 374 to 502 (TDCE…CKKP), 511 to 645 (SGCQ…KQPV), 660 to 798 (HPCY…KIPR), 815 to 939 (LFHQ…KRKT), 954 to 1098 (GTCP…EKIQ), 1117 to 1231 (LEYG…AICH), and 1243 to 1376 (ELCS…CKMK). Asn408, Asn431, and Asn452 each carry an N-linked (GlcNAc...) asparagine glycan. A helical transmembrane segment spans residues 1394 to 1416 (IVPLAVALTLVVILAIITLSFYI). The Cytoplasmic segment spans residues 1417 to 1458 (YKQNKGFFRRLAGVGNSYYPTTNFSTIHLEENILISDLEKND). The Endocytosis signal motif lies at 1432–1438 (NSYYPTT).

As to quaternary structure, interacts with sPLA2-IB/PLA2G1B; this interaction mediates intracellular signaling as well as clearance of extracellular sPLA2-IB/PLA2G1B via endocytotic pathway. Interacts with sPLA2-X/PLA2G10; this interaction mediates sPLA2-X/PLA2G10 clearance and inactivation. Post-translationally, the secretory phospholipase A2 receptor form may be produced by the action of metalloproteinases. It contains all extracellular domains and only lacks transmembrane and cytosolic regions. It is however unclear whether this form is produced by proteolytic cleavage as suggested by some experiments, or by alternative splicing. Lung, skeletal muscle, brain, kidney and heart.

It localises to the cell membrane. It is found in the secreted. Functionally, receptor for secretory phospholipase A2 (sPLA2). Also able to bind to snake PA2-like toxins. Although its precise function remains unclear, binding of sPLA2 to its receptor participates in both positive and negative regulation of sPLA2 functions as well as clearance of sPLA2. Binding of sPLA2-IB/PLA2G1B induces various effects depending on the cell type, such as activation of the mitogen-activated protein kinase (MAPK) cascade to induce cell proliferation, the production of lipid mediators, selective release of arachidonic acid in bone marrow-derived mast cells. In neutrophils, binding of sPLA2-IB/PLA2G1B can activate p38 MAPK to stimulate elastase release and cell adhesion. May be involved in responses in pro-inflammatory cytokine productions during endotoxic shock. Also has endocytic properties and rapidly internalizes sPLA2 ligands, which is particularly important for the clearance of extracellular sPLA2s to protect their potent enzymatic activities. The soluble secretory phospholipase A2 receptor form is circulating and acts as a negative regulator of sPLA2 functions by blocking the biological functions of sPLA2-IB/PLA2G1B and sPLA2-X/PLA2G10. The chain is Secretory phospholipase A2 receptor (PLA2R1) from Oryctolagus cuniculus (Rabbit).